An 825-amino-acid polypeptide reads, in one-letter code: Fibrous sheath CABYR-binding protein (825 aa).

Disordered stretches follow at residues 1 to 43 and 113 to 139; these read MVGK…SYSA and QDVE…RTGY. Residues 21-40 show a composition bias toward polar residues; it reads KSSSPKATHRIGNTSGSKGS. Phosphoserine is present on serine 160. Disordered regions lie at residues 168–232, 244–718, and 732–751; these read SRPD…LLED, QEGS…DKHS, and GEAS…EDEA. A compositionally biased stretch (polar residues) spans 200–220; that stretch reads PATNSNEEIGQKNISRTSFTQ. Positions 277 to 290 are enriched in basic and acidic residues; that stretch reads ATAKAEPRPAEETH. Composition is skewed to low complexity over residues 348 to 357 and 398 to 407; these read AEILPPSAEE and PLPAEGALEE. Positions 610–676 are enriched in pro residues; that stretch reads VQPPPAEEAP…PAEVQPPPAE (67 aa).

As to quaternary structure, interacts with CABYR. Interacts with ROPN1 and ROPN1L; the interaction increases upon spermatozoa capacitation conditions. Post-translationally, phosphorylated by PKA upon spermatozoa capacitation conditions.

The protein localises to the cell projection. It localises to the cilium. It is found in the flagellum. Its function is as follows. May be involved in the later stages of fibrous sheath biogenesis and spermatozoa capacitation. Inhibits ROPN1 and ROPN1L SUMOylation. Binds calcium. The sequence is that of Fibrous sheath CABYR-binding protein (FSCB) from Homo sapiens (Human).